Consider the following 319-residue polypeptide: Transcription factor jun-1 (319 aa).

Disordered stretches follow at residues 1-52 and 216-264; these read MEED…EKES and NGVN…CRQK. Positions 8-19 are enriched in low complexity; that stretch reads PPSSSTSSESPE. Positions 28–38 are enriched in basic residues; sequence PTRRRKNSKKD. The basic motif stretch occupies residues 244–285; the sequence is KKKLERKRARNRQAATKCRQKKMDRIKELEEQVLHEKHRGQR. The bZIP domain maps to 244-307; that stretch reads KKKLERKRAR…EHFRRTVEHH (64 aa). A leucine-zipper region spans residues 286 to 293; that stretch reads LDAELLEL.

This sequence belongs to the bZIP family. Jun subfamily. Heterodimer; with fos-1. As to expression, isoform a, isoform b, isoform c and isoform d are expressed in the spermatheca.

Its subcellular location is the nucleus. In terms of biological role, transcription factor that recognizes and binds to the AP-1 non-canonical enhancer heptamer motif 5'-TTAGTCA-3'. Required for ovulation. Controls plc-1 expression in the spermatheca to regulate spermathecal valve dilation. In Caenorhabditis elegans, this protein is Transcription factor jun-1.